We begin with the raw amino-acid sequence, 309 residues long: MILTVTMNPSIDISYPLDELKIDTVNRVVDVTKTAGGKGLNVTRVLSEFGDSVLATGLVGGKLGEFLVEHIDNQVKKDFFSIQGETRNCIAILHGDNQTEVLEKGPEVLEQEGQDFLEHFKKLLESVEVVAISGSLPAGLPVDYYASLVELANQAGKPVVLDCSGAALQAVLESPHKPTVIKPNNEELSQLLGREVSEDLDELKEVLQEPLFAGIEWIIVSLGANGTFAKHGDTFYKVDIPRIQVVNPVGSGDSTVAGISSGLLHKESDAELLIKANVLGMLNAQEKMTGHVNMANYQALYDQLIVKEV.

Belongs to the carbohydrate kinase PfkB family. LacC subfamily.

The catalysed reaction is D-tagatofuranose 6-phosphate + ATP = D-tagatofuranose 1,6-bisphosphate + ADP + H(+). Its pathway is carbohydrate metabolism; D-tagatose 6-phosphate degradation; D-glyceraldehyde 3-phosphate and glycerone phosphate from D-tagatose 6-phosphate: step 1/2. The chain is Tagatose-6-phosphate kinase from Streptococcus pneumoniae (strain Hungary19A-6).